The sequence spans 122 residues: Large ribosomal subunit protein uL14 (122 aa).

This sequence belongs to the universal ribosomal protein uL14 family. In terms of assembly, part of the 50S ribosomal subunit. Forms a cluster with proteins L3 and L19. In the 70S ribosome, L14 and L19 interact and together make contacts with the 16S rRNA in bridges B5 and B8.

In terms of biological role, binds to 23S rRNA. Forms part of two intersubunit bridges in the 70S ribosome. This chain is Large ribosomal subunit protein uL14, found in Paraburkholderia phytofirmans (strain DSM 17436 / LMG 22146 / PsJN) (Burkholderia phytofirmans).